We begin with the raw amino-acid sequence, 299 residues long: Transcription factor MYB17 (299 aa).

HTH myb-type domains are found at residues 9 to 61 (KIGL…TNYL) and 62 to 116 (RPDI…KKRL). DNA-binding regions (H-T-H motif) lie at residues 37-61 (WRTLPKLAGLLRCGKSCRLRWTNYL) and 89-112 (WAAIAAQLPGRTDNEIKNLWNTHL).

In terms of assembly, interacts with LFY. As to expression, expressed in the shoot apex, young flower buds, developing carpels and siliques. Expressed in floral meristem, initiating floral primordia and developing flowers.

The protein resides in the nucleus. Functionally, transcription factor that may play a role in flower development by repressing ANT. Regulates the transition of meristem identity from vegetative growth to flowering. Acts downstream of LFY and upstream of AP1. Directly activates AP1 to promote floral fate. Together with LFY and AP1 may constitute a regulatory network that contributes to an abrupt and robust meristem identity transition. This is Transcription factor MYB17 from Arabidopsis thaliana (Mouse-ear cress).